The primary structure comprises 502 residues: Mannitol 2-dehydrogenase (502 aa).

Residue 37–48 (IVHIGVGGFHRA) participates in NAD(+) binding.

The protein belongs to the mannitol dehydrogenase family. Monomer.

It carries out the reaction D-mannitol + NAD(+) = D-fructose + NADH + H(+). In terms of biological role, catalyzes the NAD(H)-dependent interconversion of D-fructose and D-mannitol in the mannitol metabolic pathway. This chain is Mannitol 2-dehydrogenase, found in Emericella nidulans (strain FGSC A4 / ATCC 38163 / CBS 112.46 / NRRL 194 / M139) (Aspergillus nidulans).